The sequence spans 619 residues: Replication restart protein PriA (619 aa).

In terms of domain architecture, Helicase ATP-binding spans 119–285; it reads LKELQKHPAS…KDKALVRLKG (167 aa). 132 to 139 provides a ligand contact to ATP; sequence GDTGSGKT. The DEAH box signature appears at 228-231; the sequence is DEEH. 8 residues coordinate Zn(2+): C336, C339, C345, C348, C363, C366, C376, and C379. One can recognise a Helicase C-terminal domain in the interval 371–532; the sequence is PIPKICNACQ…ELYPPFSRLC (162 aa).

Belongs to the helicase family. PriA subfamily. In terms of assembly, component of the replication restart primosome. It depends on Zn(2+) as a cofactor.

It catalyses the reaction Couples ATP hydrolysis with the unwinding of duplex DNA by translocating in the 3'-5' direction.. The catalysed reaction is ATP + H2O = ADP + phosphate + H(+). Its function is as follows. Initiates the restart of stalled replication forks, which reloads the replicative helicase on sites other than the origin of replication. Recognizes and binds to abandoned replication forks and remodels them to uncover a helicase loading site. Promotes assembly of the primosome at these replication forks. The polypeptide is Replication restart protein PriA (Helicobacter pylori (strain J99 / ATCC 700824) (Campylobacter pylori J99)).